The chain runs to 486 residues: Transcription factor aptf-4 (486 aa).

Disordered regions lie at residues 25-49 (CEPS…SAKM) and 150-173 (LSTT…NQEK). A compositionally biased stretch (polar residues) spans 150–169 (LSTTSANFTPDWNTTTNGPC). The segment at 301–430 (QRQRKVTCFS…IVEQAALYCE (130 aa)) is H-S-H (helix-span-helix), dimerization.

This sequence belongs to the AP-2 family. In terms of assembly, binds DNA as a dimer.

The protein localises to the nucleus. Sequence-specific DNA-binding protein that interacts with enhancer elements to regulate transcription of selected genes. Required for neuroblast and epidermal morphogenesis, perhaps acting in cooperation with transcription factor aptf-2. The sequence is that of Transcription factor aptf-4 from Caenorhabditis elegans.